A 545-amino-acid polypeptide reads, in one-letter code: 2-succinyl-5-enolpyruvyl-6-hydroxy-3-cyclohexene-1-carboxylate synthase (545 aa).

This sequence belongs to the TPP enzyme family. MenD subfamily. As to quaternary structure, homodimer. Requires Mg(2+) as cofactor. The cofactor is Mn(2+). It depends on thiamine diphosphate as a cofactor.

The enzyme catalyses isochorismate + 2-oxoglutarate + H(+) = 5-enolpyruvoyl-6-hydroxy-2-succinyl-cyclohex-3-ene-1-carboxylate + CO2. The protein operates within quinol/quinone metabolism; 1,4-dihydroxy-2-naphthoate biosynthesis; 1,4-dihydroxy-2-naphthoate from chorismate: step 2/7. It participates in quinol/quinone metabolism; menaquinone biosynthesis. Its function is as follows. Catalyzes the thiamine diphosphate-dependent decarboxylation of 2-oxoglutarate and the subsequent addition of the resulting succinic semialdehyde-thiamine pyrophosphate anion to isochorismate to yield 2-succinyl-5-enolpyruvyl-6-hydroxy-3-cyclohexene-1-carboxylate (SEPHCHC). This chain is 2-succinyl-5-enolpyruvyl-6-hydroxy-3-cyclohexene-1-carboxylate synthase, found in Nocardia farcinica (strain IFM 10152).